Consider the following 416-residue polypeptide: Serine hydroxymethyltransferase 1 (416 aa).

(6S)-5,6,7,8-tetrahydrofolate is bound by residues L121 and G125–L127. Residue K229 is modified to N6-(pyridoxal phosphate)lysine. Residues E245 and S354 to F356 contribute to the (6S)-5,6,7,8-tetrahydrofolate site.

Belongs to the SHMT family. Homodimer. Requires pyridoxal 5'-phosphate as cofactor.

Its subcellular location is the cytoplasm. It carries out the reaction (6R)-5,10-methylene-5,6,7,8-tetrahydrofolate + glycine + H2O = (6S)-5,6,7,8-tetrahydrofolate + L-serine. It functions in the pathway one-carbon metabolism; tetrahydrofolate interconversion. It participates in amino-acid biosynthesis; glycine biosynthesis; glycine from L-serine: step 1/1. Its function is as follows. Catalyzes the reversible interconversion of serine and glycine with tetrahydrofolate (THF) serving as the one-carbon carrier. This reaction serves as the major source of one-carbon groups required for the biosynthesis of purines, thymidylate, methionine, and other important biomolecules. Also exhibits THF-independent aldolase activity toward beta-hydroxyamino acids, producing glycine and aldehydes, via a retro-aldol mechanism. In Vibrio vulnificus (strain CMCP6), this protein is Serine hydroxymethyltransferase 1.